The primary structure comprises 173 residues: Peptide deformylase (173 aa).

Fe cation is bound by residues Cys91 and His133. Glu134 is an active-site residue. Fe cation is bound at residue His137.

This sequence belongs to the polypeptide deformylase family. The cofactor is Fe(2+).

It carries out the reaction N-terminal N-formyl-L-methionyl-[peptide] + H2O = N-terminal L-methionyl-[peptide] + formate. Removes the formyl group from the N-terminal Met of newly synthesized proteins. Requires at least a dipeptide for an efficient rate of reaction. N-terminal L-methionine is a prerequisite for activity but the enzyme has broad specificity at other positions. The chain is Peptide deformylase from Buchnera aphidicola subsp. Acyrthosiphon pisum (strain 5A).